Reading from the N-terminus, the 267-residue chain is Integral membrane protein 2C (267 aa).

Phosphothreonine is present on Thr-37. The chain crosses the membrane as a helical; Signal-anchor for type II membrane protein span at residues 55–75 (VGGVCYLSMGMVVLLMGLVFA). Residues 136 to 230 (FGGGDPADII…LCNGKDTYRL (95 aa)) form the BRICHOS domain. An intrachain disulfide couples Cys-163 to Cys-222. Asn-169 carries an N-linked (GlcNAc...) asparagine glycan.

It belongs to the ITM2 family. Interacts with BACE1. Interacts with APP. Interacts with STMN2. Type I membrane-bound, as well as soluble, furin has a pre-eminent role in ITM2C proteolytic processing. PCSK7 and PCSK5 may also be involved although to a lesser extent. The soluble form of PCSK7 is incapable of processing ITM2C. Fails to undergo shedding by ADAM10 and intramembrane cleavage by SPPL2B. High levels in the brain, specifically in the cerebral cortex, medulla, amygdala, hippocampus, thalamus, caudate nucleus, cerebellum, olfactory lobe and spinal cord. Very low levels in other organs.

It localises to the lysosome membrane. Its subcellular location is the cell membrane. Its function is as follows. Negative regulator of amyloid-beta peptide production. May inhibit the processing of APP by blocking its access to alpha- and beta-secretase. Binding to the beta-secretase-cleaved APP C-terminal fragment is negligible, suggesting that ITM2C is a poor gamma-secretase cleavage inhibitor. May play a role in TNF-induced cell death and neuronal differentiation. In Homo sapiens (Human), this protein is Integral membrane protein 2C (ITM2C).